The following is a 259-amino-acid chain: Zinc import ATP-binding protein ZnuC (259 aa).

The 218-residue stretch at 6–223 (VTVQSVSVTL…PAYHELFGPG (218 aa)) folds into the ABC transporter domain. Residue 38–45 (GPNGAGKS) participates in ATP binding. The tract at residues 230-259 (ALYTHDHDHDHDLHGNATHSHDHNGPCNHD) is disordered. Over residues 233-259 (THDHDHDHDLHGNATHSHDHNGPCNHD) the composition is skewed to basic and acidic residues.

The protein belongs to the ABC transporter superfamily. Zinc importer (TC 3.A.1.15.5) family. In terms of assembly, the complex is composed of two ATP-binding proteins (ZnuC), two transmembrane proteins (ZnuB) and a solute-binding protein (ZnuA).

The protein localises to the cell inner membrane. It carries out the reaction Zn(2+)(out) + ATP(in) + H2O(in) = Zn(2+)(in) + ADP(in) + phosphate(in) + H(+)(in). Functionally, part of the ABC transporter complex ZnuABC involved in zinc import. Responsible for energy coupling to the transport system. In Alcanivorax borkumensis (strain ATCC 700651 / DSM 11573 / NCIMB 13689 / SK2), this protein is Zinc import ATP-binding protein ZnuC.